Here is a 79-residue protein sequence, read N- to C-terminus: Small ribosomal subunit protein bS18 (79 aa).

Belongs to the bacterial ribosomal protein bS18 family. Part of the 30S ribosomal subunit. Forms a tight heterodimer with protein bS6.

Binds as a heterodimer with protein bS6 to the central domain of the 16S rRNA, where it helps stabilize the platform of the 30S subunit. The protein is Small ribosomal subunit protein bS18 of Latilactobacillus sakei subsp. sakei (strain 23K) (Lactobacillus sakei subsp. sakei).